The following is a 1875-amino-acid chain: Protein MLP1 (1875 aa).

Serine 2 is modified (N-acetylserine). Coiled-coil stretches lie at residues 69–487 and 531–1678; these read ELKA…IQYL and ERLV…SAES. Position 337 is a phosphothreonine (threonine 337). Serine 379 is subject to Phosphoserine. The Required for nuclear localization signature appears at 1496 to 1565; sequence QPSNINMEEI…EEKVEERIKS (70 aa). Positions 1641-1689 are disordered; it reads KKSFDEGKQQAMMKTTLLERKLAKMESQLSETKQSAESPPKSVNNVQNP. Positions 1667 to 1688 are enriched in polar residues; it reads SQLSETKQSAESPPKSVNNVQN. Serine 1670 and serine 1710 each carry phosphoserine. Residues 1716 to 1725 show a composition bias toward low complexity; that stretch reads KLNSKSSSGG. A disordered region spans residues 1716–1875; the sequence is KLNSKSSSGG…TDKVNDENSI (160 aa). Residues 1728–1737 are compositionally biased toward polar residues; sequence PFTSPSPNKH. Serine 1733 is modified (phosphoserine). A compositionally biased stretch (basic and acidic residues) spans 1738–1748; sequence LQNDNDKRESL. Over residues 1787-1801 the composition is skewed to polar residues; it reads TSNNPAQKDSSNRNV. Position 1803 is a phosphoserine (serine 1803). 2 stretches are compositionally biased toward basic and acidic residues: residues 1807–1840 and 1865–1875; these read TEKK…GELK and ETDKVNDENSI. A coiled-coil region spans residues 1834–1866; that stretch reads DEVGELKNDEDDTTENINESKKIKTEDEEEKET.

Component of the nuclear pore complex (NPC). NPC constitutes the exclusive means of nucleocytoplasmic transport. NPCs allow the passive diffusion of ions and small molecules and the active, nuclear transport receptor-mediated bidirectional transport of macromolecules such as proteins, RNAs, ribonucleoparticles (RNPs), and ribosomal subunits across the nuclear envelope. Due to its 8-fold rotational symmetry, all subunits are present with 8 copies or multiples thereof. Interacts with NAB2, a hnRNP required for mRNA export. Interacts with MLP2. Post-translationally, may be phosphorylated by CDC28.

It is found in the nucleus. The protein localises to the nuclear pore complex. Its function is as follows. Together with the closely related MLP2, involved in the structural and functional organization of perinuclear chromatin. Together with MLP2, associates with the nuclear pore complex and form filamentous structures along the nuclear periphery. Has a role in the localization of Esc1 to nucleolar regions. Together with MLP2, mediates tethering of the some telomeres to the nuclear periphery, probably mediated by YKU70/YKU80 (HDF1/HDF2) heterodimer and show perinuclear location dependent silencing. MLP1 and MLP2 are involved in telomere length regulation but not silencing or telomere anchoring. Recognizes the 5'-splice site of pre-mRNAs and retains unspliced pre-mRNA in the nucleus without affecting splicing itself. This chain is Protein MLP1 (MLP1), found in Saccharomyces cerevisiae (strain ATCC 204508 / S288c) (Baker's yeast).